Consider the following 116-residue polypeptide: Large ribosomal subunit protein bL17 (116 aa).

It belongs to the bacterial ribosomal protein bL17 family. As to quaternary structure, part of the 50S ribosomal subunit. Contacts protein L32.

The polypeptide is Large ribosomal subunit protein bL17 (Prochlorococcus marinus (strain MIT 9303)).